Reading from the N-terminus, the 238-residue chain is Uridylate kinase (238 aa).

12-15 (KLSG) contributes to the ATP binding site. Gly54 lines the UMP pocket. Gly55 and Arg59 together coordinate ATP. Residues Asp74 and 135–142 (TGNPFFTT) contribute to the UMP site. Positions 162, 163, 168, and 171 each coordinate ATP.

This sequence belongs to the UMP kinase family. Homohexamer.

The protein resides in the cytoplasm. The catalysed reaction is UMP + ATP = UDP + ADP. Its pathway is pyrimidine metabolism; CTP biosynthesis via de novo pathway; UDP from UMP (UMPK route): step 1/1. Inhibited by UTP. Functionally, catalyzes the reversible phosphorylation of UMP to UDP. This Rhodopseudomonas palustris (strain HaA2) protein is Uridylate kinase.